Reading from the N-terminus, the 925-residue chain is MTDASDLLSLSYSHYLARAAAARPALAERIAAWAAAPVTRAALDARLDELLAQGGQPPSEDALKKALRQLRGEAFGAVAERDLAGRADVAEVTGTMTDLAEAAIQRALALLAAELEAQYGEPRGPSGERLALGVVGMGKLGGRELNVSSDIDLIFVYEDDGETAGGARAPISVHEFFTRLGRRLIGVLSEATADGYVFRVDMRLRPNGDSGPLVCSLGMLEEYFYVQGREWERYAWIKGRLVTERASAAARRLAQQLDAIVKPFVYRRYLDFGVIGAIRSLHEQIRQEARRRATMRPDKADDIKLGRGGIREIEFSAQVFQLIRGGQDAGFRVQPTLAVLRHASASGLITEEVRAGLTHAYLFLRTLEHRLQYRNDAQTHAMPVDPAERAALAASLGFADYAALIDRLDQHRAFVEAQFDQVFADKADGGARREDDQAAGCIWSGALADDGADEALVARLAELGFADPAAVLARLQAVWRSSRYAGLPESSRVRFDRVAHRALEAAPGIDAAHRDETVVRCFDLLETVGRRGAYLALLTEYPAALRRVLSVLGATRWGGGYLIRHPQLLDELLDDEAIDSPFDWPAFKDALRRRLAAADGAEHQMDLLRHAHQAEVFRILLLDLAGRLSVEHVSDRLSELADAMLDVTIEVVWSQLAKRHRDTPCFAAIAYGKLGGKELGYASDLDLIFLYDDPDERAADVYTTFARRLITWLTTATGAGTLFDIDLRLRPNGEAGLLVTDLDAFRRYQLREGDAANTAWVWEHQALTRARYSAGDARIGAAFEAIRVQVLTTPRDAAVLAKEIVEMREKVLAGHPNTTERFDLKHDRGGMVDIEFAVQYWVLLHAARHPEMIRNTGNIALLREVSRFGLMSEEEAETVGAAYRTYRKLQHRLRLDGMEKARVEPERVAAERQAVAALWARVFGA.

Residues 1–426 are adenylyl removase; the sequence is MTDASDLLSL…AQFDQVFADK (426 aa). The adenylyl transferase stretch occupies residues 436–925; the sequence is DQAAGCIWSG…AALWARVFGA (490 aa).

Belongs to the GlnE family. Requires Mg(2+) as cofactor.

The enzyme catalyses [glutamine synthetase]-O(4)-(5'-adenylyl)-L-tyrosine + phosphate = [glutamine synthetase]-L-tyrosine + ADP. The catalysed reaction is [glutamine synthetase]-L-tyrosine + ATP = [glutamine synthetase]-O(4)-(5'-adenylyl)-L-tyrosine + diphosphate. Involved in the regulation of glutamine synthetase GlnA, a key enzyme in the process to assimilate ammonia. When cellular nitrogen levels are high, the C-terminal adenylyl transferase (AT) inactivates GlnA by covalent transfer of an adenylyl group from ATP to specific tyrosine residue of GlnA, thus reducing its activity. Conversely, when nitrogen levels are low, the N-terminal adenylyl removase (AR) activates GlnA by removing the adenylyl group by phosphorolysis, increasing its activity. The regulatory region of GlnE binds the signal transduction protein PII (GlnB) which indicates the nitrogen status of the cell. This is Bifunctional glutamine synthetase adenylyltransferase/adenylyl-removing enzyme from Burkholderia mallei (strain ATCC 23344).